A 445-amino-acid chain; its full sequence is E3 ubiquitin-protein ligase MYLIP (445 aa).

Positions 1–279 (MLCYVTRPDA…ETHAFYRCDT (279 aa)) constitute an FERM domain. The tract at residues 341 to 363 (RNDQSPPSSPLKSSDSSMSCSSC) is disordered. Over residues 350-363 (PLKSSDSSMSCSSC) the composition is skewed to low complexity. Residues Cys-360, Cys-363, and Cys-368 each contribute to the Fe cation site. Residues 387–422 (CMVCCEEEINSTFCPCGHTVCCESCAAQLQSCPVCR) form an RING-type zinc finger. Positions 431-433 (VYL) are critical for homodimerization.

As to quaternary structure, homodimer. Interacts with the E2 ubiquitin-conjugating enzyme, UBE2D1 (via RING-type zinc finger). Interacts with myosin regulatory light chain (MRLC) and TMEM4. In terms of processing, autoubiquitinated. As to expression, expressed in developing and adult brain, hippocampus, cerebellum, cerebral cortex, thalamus and substantia nigra. Predominantly found in neurons.

Its subcellular location is the cytoplasm. The protein localises to the cell membrane. It catalyses the reaction S-ubiquitinyl-[E2 ubiquitin-conjugating enzyme]-L-cysteine + [acceptor protein]-L-lysine = [E2 ubiquitin-conjugating enzyme]-L-cysteine + N(6)-ubiquitinyl-[acceptor protein]-L-lysine.. It functions in the pathway protein modification; protein ubiquitination. Can bind 1 iron ion per dimer. Iron binding seems to decrease LDLR degradation activity. E3 ubiquitin-protein ligase that mediates ubiquitination and subsequent proteasomal degradation of myosin regulatory light chain (MRLC), LDLR, VLDLR and LRP8. Activity depends on E2 enzymes of the UBE2D family. Proteasomal degradation of MRLC leads to inhibit neurite outgrowth in presence of NGF by counteracting the stabilization of MRLC by saposin-like protein (CNPY2/MSAP) and reducing CNPY2-stimulated neurite outgrowth. Acts as a sterol-dependent inhibitor of cellular cholesterol uptake by mediating ubiquitination and subsequent degradation of LDLR. This chain is E3 ubiquitin-protein ligase MYLIP (Mylip), found in Rattus norvegicus (Rat).